A 119-amino-acid chain; its full sequence is Ribonuclease P protein component (119 aa).

Belongs to the RnpA family. Consists of a catalytic RNA component (M1 or rnpB) and a protein subunit.

The enzyme catalyses Endonucleolytic cleavage of RNA, removing 5'-extranucleotides from tRNA precursor.. Its function is as follows. RNaseP catalyzes the removal of the 5'-leader sequence from pre-tRNA to produce the mature 5'-terminus. It can also cleave other RNA substrates such as 4.5S RNA. The protein component plays an auxiliary but essential role in vivo by binding to the 5'-leader sequence and broadening the substrate specificity of the ribozyme. The polypeptide is Ribonuclease P protein component (Shewanella woodyi (strain ATCC 51908 / MS32)).